A 570-amino-acid polypeptide reads, in one-letter code: Glycine--tRNA ligase (570 aa).

Arg99 and Glu165 together coordinate substrate. Residues 197-199, 207-212, 324-325, and 443-446 each bind ATP; these read RNE, LRLREF, EC, and GIDR. Residue 212 to 216 coordinates substrate; it reads FSQAE. 439 to 443 provides a ligand contact to substrate; sequence EPSFG.

It belongs to the class-II aminoacyl-tRNA synthetase family.

The protein resides in the cytoplasm. The catalysed reaction is tRNA(Gly) + glycine + ATP = glycyl-tRNA(Gly) + AMP + diphosphate. Its function is as follows. Catalyzes the attachment of glycine to tRNA(Gly). The sequence is that of Glycine--tRNA ligase from Thermococcus sibiricus (strain DSM 12597 / MM 739).